The sequence spans 255 residues: tRNA (guanine-N(1)-)-methyltransferase (255 aa).

Residues Gly-117 and 137–142 (LGDFVL) contribute to the S-adenosyl-L-methionine site.

It belongs to the RNA methyltransferase TrmD family. As to quaternary structure, homodimer.

The protein resides in the cytoplasm. It catalyses the reaction guanosine(37) in tRNA + S-adenosyl-L-methionine = N(1)-methylguanosine(37) in tRNA + S-adenosyl-L-homocysteine + H(+). Specifically methylates guanosine-37 in various tRNAs. This Paraburkholderia phymatum (strain DSM 17167 / CIP 108236 / LMG 21445 / STM815) (Burkholderia phymatum) protein is tRNA (guanine-N(1)-)-methyltransferase.